A 401-amino-acid polypeptide reads, in one-letter code: Pyruvyl transferase 1 (401 aa).

Positions 1–30 (MFANINIRKSVWLFLLAAVSCTLFIYGVTR) are cleaved as a signal peptide. The interval 38 to 64 (NPSSLTSPSSSTSVDKKKPLFTKSPRN) is disordered. Low complexity predominate over residues 39 to 50 (PSSLTSPSSSTS).

The protein belongs to the polysaccharide pyruvyl transferase family.

Involved in cell wall biogenesis. Has a role in the addition of Gal-beta1,3 moieties to galactomannans and their subsequent pyruvylation. The polypeptide is Pyruvyl transferase 1 (pvg1) (Schizosaccharomyces pombe (strain 972 / ATCC 24843) (Fission yeast)).